Here is a 348-residue protein sequence, read N- to C-terminus: Dihydroorotase (348 aa).

The Zn(2+) site is built by histidine 17 and histidine 19. Substrate-binding positions include 19-21 and asparagine 45; that span reads HLR. Residues lysine 103, histidine 140, and histidine 178 each coordinate Zn(2+). The residue at position 103 (lysine 103) is an N6-carboxylysine. Histidine 140 is a substrate binding site. Leucine 223 contributes to the substrate binding site. Aspartate 251 contacts Zn(2+). Residue aspartate 251 is part of the active site. Residues histidine 255 and alanine 267 each contribute to the substrate site.

This sequence belongs to the metallo-dependent hydrolases superfamily. DHOase family. Class II DHOase subfamily. In terms of assembly, homodimer. It depends on Zn(2+) as a cofactor.

The enzyme catalyses (S)-dihydroorotate + H2O = N-carbamoyl-L-aspartate + H(+). It participates in pyrimidine metabolism; UMP biosynthesis via de novo pathway; (S)-dihydroorotate from bicarbonate: step 3/3. Its function is as follows. Catalyzes the reversible cyclization of carbamoyl aspartate to dihydroorotate. In Salmonella paratyphi B (strain ATCC BAA-1250 / SPB7), this protein is Dihydroorotase.